The sequence spans 312 residues: Olfactory receptor OR51C1 (312 aa).

The Extracellular segment spans residues 1–26 (MGSNITSTSIIFLLTGVPGLEAFHTW). The chain crosses the membrane as a helical span at residues 27 to 47 (ISIPFCFLSVTALLGNSLILF). Residues 48 to 66 (ATITQPSLHEPMYYFLSML) are Cytoplasmic-facing. Residues 67–87 (SATDLGLSISTLVTMLSIFWF) traverse the membrane as a helical segment. The Extracellular segment spans residues 88–99 (NVREISFNACLS). Residues cysteine 97 and cysteine 179 are joined by a disulfide bond. Residues 100–120 (HMFFIKFFTVMESSVLLAMAF) traverse the membrane as a helical segment. Over 121–143 (DRFVAVSNPLRYAMILTDSRIAQ) the chain is Cytoplasmic. The helical transmembrane segment at 144–164 (IGVASVIRGLLMLTPMVALLI) threads the bilayer. Topologically, residues 165-201 (RLSYCHSQVLHHSYCYHPDVMKLSCTDTRINSAVGLT) are extracellular. A helical membrane pass occupies residues 202 to 222 (AMFSTVGVDLLLILLSYVLII). Residues 223–240 (RTVLSVASPEERKETFST) lie on the Cytoplasmic side of the membrane. Residues 241-261 (CVSHIVAFAIYYIPLISLSIV) traverse the membrane as a helical segment. The Extracellular portion of the chain corresponds to 262–273 (HRFGKQAPAYVH). A helical transmembrane segment spans residues 274–294 (TMIANTYLLISPLMNPVIYSV). Residues 295-312 (KTKQIRRAVIKILHSKET) lie on the Cytoplasmic side of the membrane.

The protein belongs to the G-protein coupled receptor 1 family.

Its subcellular location is the membrane. Its function is as follows. Odorant receptor. In Homo sapiens (Human), this protein is Olfactory receptor OR51C1.